A 115-amino-acid chain; its full sequence is Anamorsin homolog 1 (115 aa).

The disordered stretch occupies residues 30-115 (VKEATKGEDC…KVKLNLTDDI (86 aa)). Positions 39, 46, 49, and 51 each coordinate [2Fe-2S] cluster. The interval 39 to 51 (CTTRRRACKNCTC) is fe-S binding site A. The [4Fe-4S] cluster site is built by Cys77, Cys80, Cys88, and Cys91. 2 short sequence motifs (cx2C motif) span residues 77-80 (CGNC) and 88-91 (CATC). The fe-S binding site B stretch occupies residues 77 to 91 (CGNCAKGDAFRCATC).

This sequence belongs to the anamorsin family. As to quaternary structure, monomer. [2Fe-2S] cluster serves as cofactor. The cofactor is [4Fe-4S] cluster.

Its subcellular location is the cytoplasm. It localises to the mitochondrion intermembrane space. Its function is as follows. Component of the cytosolic iron-sulfur (Fe-S) protein assembly (CIA) machinery. Required for the maturation of extramitochondrial Fe-S proteins. Part of an electron transfer chain functioning in an early step of cytosolic Fe-S biogenesis, facilitating the de novo assembly of a [4Fe-4S] cluster on the cytosolic Fe-S scaffold complex. Electrons are transferred from NADPH via a FAD- and FMN-containing diflavin oxidoreductase. Together with the diflavin oxidoreductase, also required for the assembly of the diferric tyrosyl radical cofactor of ribonucleotide reductase (RNR), probably by providing electrons for reduction during radical cofactor maturation in the catalytic small subunit. This chain is Anamorsin homolog 1, found in Trypanosoma cruzi (strain CL Brener).